A 188-amino-acid polypeptide reads, in one-letter code: UPF0301 protein XC_1365 (188 aa).

The protein belongs to the UPF0301 (AlgH) family.

This is UPF0301 protein XC_1365 from Xanthomonas campestris pv. campestris (strain 8004).